The sequence spans 29 residues: Snake venom metalloproteinase bothrolysin (29 aa).

In terms of domain architecture, Peptidase M12B spans 6-29; it reads RYIELFLVVDSGMFMKYNGNSDKI. Glu9 contributes to the Ca(2+) binding site.

This sequence belongs to the venom metalloproteinase (M12B) family. Zn(2+) serves as cofactor. In terms of tissue distribution, expressed by the venom gland.

It is found in the secreted. The catalysed reaction is Cleavage of 4-Gln-|-His-5, 9-Ser-|-His-10 and 14-Ala-|-Leu-15 of insulin B chain and Pro-|-Phe of angiotensin I.. Snake venom zinc metalloproteinase that impairs hemostasis in the envenomed animal. The protein is Snake venom metalloproteinase bothrolysin of Bothrops jararaca (Jararaca).